A 555-amino-acid chain; its full sequence is (+)-delta-cadinene synthase isozyme A (555 aa).

Residues 1-22 form a disordered region; that stretch reads MASQASQVLASPHPAISSENRP. 4 residues coordinate Mg(2+): aspartate 308, aspartate 312, aspartate 452, and glutamate 456. Positions 308 to 312 match the DDXXD motif motif; that stretch reads DDTYD.

It belongs to the terpene synthase family. It depends on Mg(2+) as a cofactor.

The enzyme catalyses (2E,6E)-farnesyl diphosphate = (1S,8aR)-delta-cadinene + diphosphate. The protein operates within secondary metabolite biosynthesis; terpenoid biosynthesis. Functionally, responsible for the cyclization of trans,trans-farnesyl diphosphate (FPP) to (+)-delta cadinene. The chain is (+)-delta-cadinene synthase isozyme A (CAD1-A) from Gossypium arboreum (Tree cotton).